Reading from the N-terminus, the 205-residue chain is Putative 3-methyladenine DNA glycosylase (205 aa).

Belongs to the DNA glycosylase MPG family.

In Bacillus cereus (strain ATCC 10987 / NRS 248), this protein is Putative 3-methyladenine DNA glycosylase.